The primary structure comprises 310 residues: Transcription initiation factor TFIID subunit 8 (310 aa).

The tract at residues 1 to 30 (MADAAATAGAGGSGTRSGSKQSTNPADNYH) is disordered. Position 2 is an N-acetylalanine (Ala2). The Histone-fold; involved in forming hexamer structure in TFIID complex domain maps to 35 to 102 (RTLQVVVSSL…IVVTLVEMGF (68 aa)). A Phosphothreonine modification is found at Thr130. Positions 262-310 (DSGAEKENTSVLQQNPSLSGSRNGEENIIDNPYLRPVKKPKIRRKKSLS) are disordered. The span at 270 to 283 (TSVLQQNPSLSGSR) shows a compositional bias: polar residues. Ser271 carries the post-translational modification Phosphoserine. Positions 294–307 (YLRPVKKPKIRRKK) match the Nuclear localization signal motif. A compositionally biased stretch (basic residues) spans 297–310 (PVKKPKIRRKKSLS).

The protein belongs to the TAF8 family. Component of the TFIID basal transcription factor complex, composed of TATA-box-binding protein TBP, and a number of TBP-associated factors (TAFs), including TAF1, TAF2, TAF3, TAF4, TAF5, TAF6, TAF7, TAF8, TAF9, TAF10, TAF11, TAF12 and TAF13. Interacts with TBP, TAF1, TAF6, TAF10, TAF11 and TAF13. Component also of a small TAF complex (SMAT) containing TAF8, TAF10 and SUPT7L. Forms a heterodimer with TAF10. Interaction with TAF10 is mediated mainly via its histone fold domain while interaction with SUPT7L is via its C-terminal region.

Its subcellular location is the nucleus. The protein localises to the cytoplasm. In terms of biological role, the TFIID basal transcription factor complex plays a major role in the initiation of RNA polymerase II (Pol II)-dependent transcription. TFIID recognizes and binds promoters with or without a TATA box via its subunit TBP, a TATA-box-binding protein, and promotes assembly of the pre-initiation complex (PIC). The TFIID complex consists of TBP and TBP-associated factors (TAFs), including TAF1, TAF2, TAF3, TAF4, TAF5, TAF6, TAF7, TAF8, TAF9, TAF10, TAF11, TAF12 and TAF13. The TFIID complex structure can be divided into 3 modules TFIID-A, TFIID-B, and TFIID-C. TAF8 is involved in forming the TFIID-B module, together with TAF5. Mediates both basal and activator-dependent transcription. Plays a role in the differentiation of preadipocyte fibroblasts to adipocytes, however, does not seem to play a role in differentiation of myoblasts. Required for the integration of TAF10 in the TAF complex. May be important for survival of cells of the inner cell mass which constitute the pluripotent cell population of the early embryo. The chain is Transcription initiation factor TFIID subunit 8 (TAF8) from Homo sapiens (Human).